Here is a 443-residue protein sequence, read N- to C-terminus: Major royal jelly protein 7 (443 aa).

The N-terminal stretch at 1–17 (MTRWLFMVACLGIACQG) is a signal peptide. Residues N145, N161, N178, and N321 are each glycosylated (N-linked (GlcNAc...) asparagine).

This sequence belongs to the major royal jelly protein family. Found in and secreted from the hypopharyngeal glands of the worker honey bee (at protein level); expression peaks at 12 days post eclosion. Expressed in the brains of adult worker bees peaking at 12 days post eclosion (at protein level). Expressed in the spermatheca of adult queen bees (at protein level); Expression levels are higher in mated queens than in virgin queens.

The protein resides in the secreted. Functionally, component of royal jelly, a substance produced in the hypopharyngeal gland containing proteins, free amino acids, fatty acids, sugars and other nutrients, which is fed to developing larvae by worker nurse bees. All larvae are fed some royal jelly (also known as worker jelly) early in their development but it forms the principal source of nutrition for larvae destined to become queen bees. Produced in the spermatheca of adult queen bees, along with other major royal jelly proteins, where it may act as a nutrient supply for sperm stored by mated queens, or be involved in energy metabolism. In Apis mellifera (Honeybee), this protein is Major royal jelly protein 7.